The chain runs to 95 residues: Ribonuclease kappa-B (95 aa).

The next 2 membrane-spanning stretches (helical) occupy residues 12–32 (GLIISVWGIIQLVLMGLFFYI) and 68–88 (CWIAACIYVLTLLLSAQQFYV).

It belongs to the RNase K family.

The protein localises to the membrane. Inhibited by Zn(2+) and Hg(2+), while it is unaffected by Ca(2+). In terms of biological role, endoribonuclease which displays activity against poly(C) and poly(U) synthetic substrates, as well as rRNA. This is Ribonuclease kappa-B from Ceratitis capitata (Mediterranean fruit fly).